The primary structure comprises 336 residues: Holliday junction branch migration complex subunit RuvB (336 aa).

Positions methionine 1–tyrosine 182 are large ATPase domain (RuvB-L). Residues leucine 21, arginine 22, glycine 63, lysine 66, threonine 67, serine 68, glutamate 129–phenylalanine 131, arginine 172, tyrosine 182, and arginine 219 contribute to the ATP site. A Mg(2+)-binding site is contributed by threonine 67. The interval asparagine 183–glycine 253 is small ATPAse domain (RuvB-S). A head domain (RuvB-H) region spans residues glutamate 256–phenylalanine 336. The DNA site is built by arginine 310 and arginine 315.

It belongs to the RuvB family. As to quaternary structure, homohexamer. Forms an RuvA(8)-RuvB(12)-Holliday junction (HJ) complex. HJ DNA is sandwiched between 2 RuvA tetramers; dsDNA enters through RuvA and exits via RuvB. An RuvB hexamer assembles on each DNA strand where it exits the tetramer. Each RuvB hexamer is contacted by two RuvA subunits (via domain III) on 2 adjacent RuvB subunits; this complex drives branch migration. In the full resolvosome a probable DNA-RuvA(4)-RuvB(12)-RuvC(2) complex forms which resolves the HJ.

Its subcellular location is the cytoplasm. It catalyses the reaction ATP + H2O = ADP + phosphate + H(+). Its function is as follows. The RuvA-RuvB-RuvC complex processes Holliday junction (HJ) DNA during genetic recombination and DNA repair, while the RuvA-RuvB complex plays an important role in the rescue of blocked DNA replication forks via replication fork reversal (RFR). RuvA specifically binds to HJ cruciform DNA, conferring on it an open structure. The RuvB hexamer acts as an ATP-dependent pump, pulling dsDNA into and through the RuvAB complex. RuvB forms 2 homohexamers on either side of HJ DNA bound by 1 or 2 RuvA tetramers; 4 subunits per hexamer contact DNA at a time. Coordinated motions by a converter formed by DNA-disengaged RuvB subunits stimulates ATP hydrolysis and nucleotide exchange. Immobilization of the converter enables RuvB to convert the ATP-contained energy into a lever motion, pulling 2 nucleotides of DNA out of the RuvA tetramer per ATP hydrolyzed, thus driving DNA branch migration. The RuvB motors rotate together with the DNA substrate, which together with the progressing nucleotide cycle form the mechanistic basis for DNA recombination by continuous HJ branch migration. Branch migration allows RuvC to scan DNA until it finds its consensus sequence, where it cleaves and resolves cruciform DNA. In Helicobacter pylori (strain ATCC 700392 / 26695) (Campylobacter pylori), this protein is Holliday junction branch migration complex subunit RuvB.